The chain runs to 337 residues: UPF0284 protein AF_0276 (337 aa).

The protein belongs to the UPF0284 family.

The polypeptide is UPF0284 protein AF_0276 (Archaeoglobus fulgidus (strain ATCC 49558 / DSM 4304 / JCM 9628 / NBRC 100126 / VC-16)).